We begin with the raw amino-acid sequence, 419 residues long: Enolase (419 aa).

Glutamine 161 provides a ligand contact to (2R)-2-phosphoglycerate. Glutamate 205 functions as the Proton donor in the catalytic mechanism. 3 residues coordinate Mg(2+): aspartate 240, glutamate 283, and aspartate 309. Positions 334, 363, 364, and 385 each coordinate (2R)-2-phosphoglycerate. Lysine 334 serves as the catalytic Proton acceptor.

The protein belongs to the enolase family. Mg(2+) serves as cofactor.

It localises to the cytoplasm. It is found in the secreted. The protein resides in the cell surface. The catalysed reaction is (2R)-2-phosphoglycerate = phosphoenolpyruvate + H2O. It participates in carbohydrate degradation; glycolysis; pyruvate from D-glyceraldehyde 3-phosphate: step 4/5. Its function is as follows. Catalyzes the reversible conversion of 2-phosphoglycerate (2-PG) into phosphoenolpyruvate (PEP). It is essential for the degradation of carbohydrates via glycolysis. The chain is Enolase from Saccharolobus islandicus (strain Y.N.15.51 / Yellowstone #2) (Sulfolobus islandicus).